A 360-amino-acid polypeptide reads, in one-letter code: Acetylxylan esterase / glucomannan deacetylase (360 aa).

Residues 1-21 form the signal peptide; the sequence is MKPHALIGLLAGMLLSSSLYA. Ser151 functions as the Nucleophile in the catalytic mechanism.

Belongs to the carbohydrate esterase 2 (CE2) family.

Its subcellular location is the secreted. It catalyses the reaction Deacetylation of xylans and xylo-oligosaccharides.. The protein operates within glycan degradation; xylan degradation. In terms of biological role, involved in the degradation of plant cell wall polysaccharides. Catalyzes the deacetylation of acetylated birchwood xylan and glucomannan, with a large preference for the latter, and of the synthetic substrate 4-nitrophenyl acetate (4-NPAc). The chain is Acetylxylan esterase / glucomannan deacetylase from Cellvibrio japonicus (strain Ueda107) (Pseudomonas fluorescens subsp. cellulosa).